A 122-amino-acid chain; its full sequence is uncharacterized protein (122 aa).

The protein resides in the mitochondrion. This is an uncharacterized protein from Arabidopsis thaliana (Mouse-ear cress).